A 205-amino-acid polypeptide reads, in one-letter code: MTKRISAKHKIDRRLKINLWGRPKSPFNKRDYGPGQHGQGRKGKPSDYGIQLQAKQKLKGYYGNINERQFRNIYKKATMLKGDTGENLIGLLERRLDSVVYRARFSTTVFSARQLINHGHVRVNGKKVNIGSYVVKEEDIIEIRDKSKQLAIIDIALASKERETPEYINLDEKNKKVTFVRTPKFDEVPYPVIMEPNLVIEYYSR.

A disordered region spans residues Gly21 to Asp47. The 61-residue stretch at Arg94–Asp154 folds into the S4 RNA-binding domain.

Belongs to the universal ribosomal protein uS4 family. As to quaternary structure, part of the 30S ribosomal subunit. Contacts protein S5. The interaction surface between S4 and S5 is involved in control of translational fidelity.

In terms of biological role, one of the primary rRNA binding proteins, it binds directly to 16S rRNA where it nucleates assembly of the body of the 30S subunit. Its function is as follows. With S5 and S12 plays an important role in translational accuracy. In Pelagibacter ubique (strain HTCC1062), this protein is Small ribosomal subunit protein uS4.